The chain runs to 342 residues: P21 prophage-derived major head protein (342 aa).

It belongs to the lambda phage major capsid protein family.

This Escherichia coli O6:H1 (strain CFT073 / ATCC 700928 / UPEC) protein is P21 prophage-derived major head protein.